The sequence spans 623 residues: Zinc finger protein 143 (623 aa).

7 C2H2-type zinc fingers span residues 230–254 (FRCE…ERSH), 260–284 (YICD…VRTH), 290–314 (YRCQ…TRTH), 320–344 (FKCP…IRTH), 350–374 (YYCA…MRIH), 380–404 (YVCT…HVVH), and 410–433 (YNCN…RTAH).

Belongs to the GLI C2H2-type zinc-finger protein family.

Its subcellular location is the nucleus. Functionally, transcriptional activator. Activates the gene for selenocysteine tRNA (tRNAsec). Binds to the activator element (AE) motif of the selenocysteine tRNA gene promoter. In Danio rerio (Zebrafish), this protein is Zinc finger protein 143 (znf143).